Here is a 207-residue protein sequence, read N- to C-terminus: Probable GTP-binding protein EngB (207 aa).

One can recognise an EngB-type G domain in the interval 25–202 (DVPEIAFVGR…ATLLWQWAHP (178 aa)). Residues 33–40 (GRSNAGKS), 60–64 (GRTQH), 82–85 (DLPG), 152–155 (TKAD), and 181–183 (FSA) each bind GTP. Positions 40 and 62 each coordinate Mg(2+).

The protein belongs to the TRAFAC class TrmE-Era-EngA-EngB-Septin-like GTPase superfamily. EngB GTPase family. Mg(2+) serves as cofactor.

Functionally, necessary for normal cell division and for the maintenance of normal septation. The chain is Probable GTP-binding protein EngB from Albidiferax ferrireducens (strain ATCC BAA-621 / DSM 15236 / T118) (Rhodoferax ferrireducens).